Consider the following 240-residue polypeptide: UDP-2,3-diacylglucosamine hydrolase (240 aa).

Mn(2+) contacts are provided by Asp-9, His-11, Asp-43, Asn-81, and His-116. 81 to 82 (NR) is a binding site for substrate. Substrate contacts are provided by Asp-124, Ser-162, Lys-166, Lys-169, and His-197. 2 residues coordinate Mn(2+): His-197 and His-199.

This sequence belongs to the LpxH family. Requires Mn(2+) as cofactor.

It localises to the cell inner membrane. It catalyses the reaction UDP-2-N,3-O-bis[(3R)-3-hydroxytetradecanoyl]-alpha-D-glucosamine + H2O = 2-N,3-O-bis[(3R)-3-hydroxytetradecanoyl]-alpha-D-glucosaminyl 1-phosphate + UMP + 2 H(+). The protein operates within glycolipid biosynthesis; lipid IV(A) biosynthesis; lipid IV(A) from (3R)-3-hydroxytetradecanoyl-[acyl-carrier-protein] and UDP-N-acetyl-alpha-D-glucosamine: step 4/6. Hydrolyzes the pyrophosphate bond of UDP-2,3-diacylglucosamine to yield 2,3-diacylglucosamine 1-phosphate (lipid X) and UMP by catalyzing the attack of water at the alpha-P atom. Involved in the biosynthesis of lipid A, a phosphorylated glycolipid that anchors the lipopolysaccharide to the outer membrane of the cell. The chain is UDP-2,3-diacylglucosamine hydrolase from Neisseria meningitidis serogroup C (strain 053442).